The following is a 396-amino-acid chain: 8-amino-7-oxononanoate synthase (396 aa).

Arg19 serves as a coordination point for substrate. 106-107 (GY) serves as a coordination point for pyridoxal 5'-phosphate. His131 lines the substrate pocket. Residues Ser176, His204, and Thr233 each coordinate pyridoxal 5'-phosphate. N6-(pyridoxal phosphate)lysine is present on Lys236. A substrate-binding site is contributed by Thr350.

The protein belongs to the class-II pyridoxal-phosphate-dependent aminotransferase family. BioF subfamily. As to quaternary structure, homodimer. The cofactor is pyridoxal 5'-phosphate.

It carries out the reaction 6-carboxyhexanoyl-[ACP] + L-alanine + H(+) = (8S)-8-amino-7-oxononanoate + holo-[ACP] + CO2. Its pathway is cofactor biosynthesis; biotin biosynthesis. In terms of biological role, catalyzes the decarboxylative condensation of pimeloyl-[acyl-carrier protein] and L-alanine to produce 8-amino-7-oxononanoate (AON), [acyl-carrier protein], and carbon dioxide. This chain is 8-amino-7-oxononanoate synthase, found in Pseudomonas syringae pv. tomato (strain ATCC BAA-871 / DC3000).